The following is an 808-amino-acid chain: Auxin response factor 4 (808 aa).

A compositionally biased stretch (pro residues) spans 1 to 13 (MPPAAMAPPPPPQ). The disordered stretch occupies residues 1 to 20 (MPPAAMAPPPPPQGSSTGDP). The segment at residues 129–231 (FCKTLTASDT…ELRVGVRRAM (103 aa)) is a DNA-binding region (TF-B3). Basic and acidic residues predominate over residues 342–352 (PSTIPRPDRVS). Disordered regions lie at residues 342–433 (PSTI…DSDV), 661–691 (TAGT…VAST), and 778–808 (QKMN…KSDN). Positions 402–432 (AQAQRSQNSTVLQGQEQMTLRSNLTESNDSD) are enriched in polar residues. Residues 692-785 (RSCTKVHKQG…EVQKMNSKSN (94 aa)) enclose the PB1 domain. Positions 787-799 (PRKDDSSENEKGH) are enriched in basic and acidic residues.

The protein belongs to the ARF family. As to quaternary structure, homodimers and heterodimers. Expressed in roots, culms, leaves and young panicles.

It localises to the nucleus. Functionally, auxin response factors (ARFs) are transcriptional factors that bind specifically to the DNA sequence 5'-TGTCTC-3' found in the auxin-responsive promoter elements (AuxREs). This Oryza sativa subsp. japonica (Rice) protein is Auxin response factor 4 (ARF4).